The primary structure comprises 467 residues: Uronate isomerase (467 aa).

The protein belongs to the metallo-dependent hydrolases superfamily. Uronate isomerase family.

It catalyses the reaction D-glucuronate = D-fructuronate. The enzyme catalyses aldehydo-D-galacturonate = keto-D-tagaturonate. The protein operates within carbohydrate metabolism; pentose and glucuronate interconversion. This is Uronate isomerase from Actinobacillus succinogenes (strain ATCC 55618 / DSM 22257 / CCUG 43843 / 130Z).